The following is a 132-amino-acid chain: Small ribosomal subunit protein uS8 (132 aa).

The protein belongs to the universal ribosomal protein uS8 family. In terms of assembly, part of the 30S ribosomal subunit. Contacts proteins S5 and S12.

Its function is as follows. One of the primary rRNA binding proteins, it binds directly to 16S rRNA central domain where it helps coordinate assembly of the platform of the 30S subunit. The chain is Small ribosomal subunit protein uS8 from Exiguobacterium sp. (strain ATCC BAA-1283 / AT1b).